We begin with the raw amino-acid sequence, 620 residues long: Synchronized import protein 1 (620 aa).

Residues 1-32 (MGRSKKRSRASSSRLNPLRKAGSNDNNKDTNV) are disordered. ARM repeat units lie at residues 25 to 64 (DNNK…VLCE), 66 to 106 (AHMR…NLSL), 181 to 221 (DDIL…TTLD), 258 to 299 (ANEL…NIDP), 340 to 386 (IKLQ…NFLP), 435 to 470 (DSQD…NRAL), 471 to 510 (INVQ…TYAM), and 564 to 607 (RGGF…TLDS).

It belongs to the nuclear import and ribosome assembly adapter family. In terms of assembly, forms a heterotrimeric complex with RPL5 and RPL11A or RPL11B; interaction of this complex with KAP104 allows the nuclear import of the heterotrimer. Component of a hexameric 5S RNP precursor complex, composed of 5S RNA, RRS1, RPF2, RPL5, RPL11A/RPL11B and SYO1; this complex acts as a precursor for ribosome assembly.

It localises to the cytoplasm. It is found in the nucleus. In terms of biological role, nuclear import adapter that specifically recruits the two functionally and topologically linked ribosomal proteins RPL5 and RPL11 (encoded by RPL11A and RPL11B). Guarantees that this cargo pair remains bound together from the time of synthesis in the cytoplasm until delivery to the nascent 5S rRNA in the nucleus. The sequence is that of Synchronized import protein 1 (SYO1) from Saccharomyces cerevisiae (strain ATCC 204508 / S288c) (Baker's yeast).